The primary structure comprises 447 residues: Putative branched-chain amino acid carrier protein SH1502 (447 aa).

The next 13 membrane-spanning stretches (helical) occupy residues 6-26 (WIVGFTLFAMFFGAGNLIFPP), 40-60 (VIAFCLTGIGLPLLGVIVGAL), 74-94 (PKFSVIFLIIIYLTIGPLFAI), 116-136 (LVLFIFTLIYFLVVLYLCINP), 143-163 (IGSLLTPLLLITILAMIIKGF), 193-213 (GYLTMDAIAAIAFSMIVVNAI), 229-249 (VMSGLIAAIALVFIYVSLGFI), 270-287 (VGAYLLTTMAANSFGVFG), 290-310 (LLGIIVALACLTTACGLIVSV), 328-348 (IFFTLISFILANLGLNAVISM), 350-370 (VPVLSVIYPIAITVVLLILLA), 382-402 (IPIAVISIVSILSVISTNGWV), and 417-437 (LEWFPIAVVATIIGYVVAKFV).

It belongs to the branched chain amino acid transporter family.

It localises to the cell membrane. Its function is as follows. Component of the transport system for branched-chain amino acids (leucine, isoleucine and valine), which is coupled to a proton motive force. This is Putative branched-chain amino acid carrier protein SH1502 from Staphylococcus haemolyticus (strain JCSC1435).